A 518-amino-acid polypeptide reads, in one-letter code: Phenylacetate 2-hydroxylase (518 aa).

Heme is bound at residue Cys437.

The protein belongs to the cytochrome P450 family.

The catalysed reaction is 2-phenylacetate + reduced [NADPH--hemoprotein reductase] + O2 = (2-hydroxyphenyl)acetate + oxidized [NADPH--hemoprotein reductase] + H2O + H(+). It participates in aromatic compound metabolism; phenylacetate degradation. Its function is as follows. Catalyzes the hydroxylation of phenylacetate to 2-hydroxyphenylacetate in the homogentisate pathway. The homogentisate pathway is used to catabolize phenylacetate and use it as a carbon source. Can also catalyze the hydroxylation of 3-hydroxyphenylacetate to 2,5-dihydroxyphenylacetate (homogentisate) at low efficiency. This Emericella nidulans (Aspergillus nidulans) protein is Phenylacetate 2-hydroxylase (phacA).